The sequence spans 470 residues: ATP synthase subunit beta (470 aa).

Residue 155–162 (GGAGVGKT) coordinates ATP.

Belongs to the ATPase alpha/beta chains family. As to quaternary structure, F-type ATPases have 2 components, CF(1) - the catalytic core - and CF(0) - the membrane proton channel. CF(1) has five subunits: alpha(3), beta(3), gamma(1), delta(1), epsilon(1). CF(0) has three main subunits: a(1), b(2) and c(9-12). The alpha and beta chains form an alternating ring which encloses part of the gamma chain. CF(1) is attached to CF(0) by a central stalk formed by the gamma and epsilon chains, while a peripheral stalk is formed by the delta and b chains.

The protein localises to the cell inner membrane. The enzyme catalyses ATP + H2O + 4 H(+)(in) = ADP + phosphate + 5 H(+)(out). Functionally, produces ATP from ADP in the presence of a proton gradient across the membrane. The catalytic sites are hosted primarily by the beta subunits. The polypeptide is ATP synthase subunit beta (Oleidesulfovibrio alaskensis (strain ATCC BAA-1058 / DSM 17464 / G20) (Desulfovibrio alaskensis)).